A 137-amino-acid polypeptide reads, in one-letter code: Putative transcription elongation factor S-II-like protein 055R (137 aa).

The segment at 85 to 136 (DFITCPYEVSEGVLRCGKCDCTKILWFSKQTRSMDEPTTIFASCSNCKTRWT) adopts a TFIIS-type zinc-finger fold. Zn(2+) is bound by residues C89, C103, C128, and C131.

The protein belongs to the IIV-6 349L family.

The protein is Putative transcription elongation factor S-II-like protein 055R of Aedes vexans (Inland floodwater mosquito).